The sequence spans 115 residues: MRIYVNEIKVTEDSINCYTEQSTEGLQEAGQMLVDSDNYSFAYILDDGQSYSYLIFVQETWSMLYENKGKKLIINDELELKQFENEFNYILDNIQGNSNYGKEFVSVVENTFELD.

Belongs to the UPF0738 family.

The polypeptide is UPF0738 protein SSP1780 (Staphylococcus saprophyticus subsp. saprophyticus (strain ATCC 15305 / DSM 20229 / NCIMB 8711 / NCTC 7292 / S-41)).